A 408-amino-acid chain; its full sequence is Peptidase T (408 aa).

Histidine 78 contacts Zn(2+). The active site involves aspartate 80. Aspartate 141 is a Zn(2+) binding site. Glutamate 175 serves as the catalytic Proton acceptor. Zn(2+) contacts are provided by glutamate 176, aspartate 198, and histidine 380.

It belongs to the peptidase M20B family. Zn(2+) is required as a cofactor.

It is found in the cytoplasm. It catalyses the reaction Release of the N-terminal residue from a tripeptide.. In terms of biological role, cleaves the N-terminal amino acid of tripeptides. The polypeptide is Peptidase T (Clostridium botulinum (strain Loch Maree / Type A3)).